An 894-amino-acid polypeptide reads, in one-letter code: ABC-transporter-regulating transcription factor (894 aa).

Positions 71-98 (CDMCRKKKIKCDGKMPKCSHCINYRTDC) form a DNA-binding region, zn(2)-C6 fungal-type. The span at 159-174 (NTALNSLKSPTNKFNG) shows a compositional bias: polar residues. The disordered stretch occupies residues 159–219 (NTALNSLKSP…PKESETEVEG (61 aa)). Residues 175–189 (SSATSQSQHTTASRH) show a composition bias toward low complexity. Over residues 199-210 (SPHTAATSPNSP) the composition is skewed to polar residues. A helical transmembrane segment spans residues 649–669 (CVWLILYYPVSALVTLFANIL). The disordered stretch occupies residues 724–797 (AEKESHSKKK…MSNPTRAFAP (74 aa)). The segment covering 736 to 750 (AAPDEPQDLRQKTPD) has biased composition (basic and acidic residues). Polar residues-rich tracts occupy residues 751–761 (ENSVPSPSTKR) and 771–792 (LFPSSSYPINLGNTGPDMSNPT).

The protein resides in the nucleus. The protein localises to the membrane. Functionally, transcription factor that regulates expression of the genes related to resistance to azole compounds. In Aspergillus oryzae (strain ATCC 42149 / RIB 40) (Yellow koji mold), this protein is ABC-transporter-regulating transcription factor.